The chain runs to 418 residues: MAP kinase-interacting serine/threonine-protein kinase 1 (418 aa).

Residues 1–23 (MVSSQPVPFDDGGKRRKKKRKTR) are disordered. The Protein kinase domain occupies 37 to 321 (RLTDELLGEG…AFQVLQHPWL (285 aa)). ATP is bound by residues 43 to 51 (LGEGAYAKV) and lysine 66. Residue aspartate 158 is the Proton acceptor of the active site. The segment at 384–418 (PPSKSRLAKRRAQAHARKGGSHPTHSTVTASQGTP) is disordered. Residues 389–403 (RLAKRRAQAHARKGG) show a composition bias toward basic residues. Residues 406–418 (PTHSTVTASQGTP) show a composition bias toward polar residues.

This sequence belongs to the protein kinase superfamily. CAMK Ser/Thr protein kinase family. Mg(2+) serves as cofactor.

The catalysed reaction is L-seryl-[protein] + ATP = O-phospho-L-seryl-[protein] + ADP + H(+). It carries out the reaction L-threonyl-[protein] + ATP = O-phospho-L-threonyl-[protein] + ADP + H(+). Functionally, may play a role in the response to environmental stress and cytokines. Appears to regulate translation by phosphorylating EIF4E, thus increasing the affinity of this protein for the 7-methylguanosine-containing mRNA cap. The chain is MAP kinase-interacting serine/threonine-protein kinase 1 (mknk1) from Xenopus laevis (African clawed frog).